A 305-amino-acid polypeptide reads, in one-letter code: UDP-3-O-acyl-N-acetylglucosamine deacetylase (305 aa).

His79, His238, and Asp242 together coordinate Zn(2+). Residue His265 is the Proton donor of the active site.

It belongs to the LpxC family. It depends on Zn(2+) as a cofactor.

It catalyses the reaction a UDP-3-O-[(3R)-3-hydroxyacyl]-N-acetyl-alpha-D-glucosamine + H2O = a UDP-3-O-[(3R)-3-hydroxyacyl]-alpha-D-glucosamine + acetate. It functions in the pathway glycolipid biosynthesis; lipid IV(A) biosynthesis; lipid IV(A) from (3R)-3-hydroxytetradecanoyl-[acyl-carrier-protein] and UDP-N-acetyl-alpha-D-glucosamine: step 2/6. Functionally, catalyzes the hydrolysis of UDP-3-O-myristoyl-N-acetylglucosamine to form UDP-3-O-myristoylglucosamine and acetate, the committed step in lipid A biosynthesis. In Histophilus somni (strain 129Pt) (Haemophilus somnus), this protein is UDP-3-O-acyl-N-acetylglucosamine deacetylase.